The primary structure comprises 163 residues: Large ribosomal subunit protein uL10 (163 aa).

Belongs to the universal ribosomal protein uL10 family. Part of the ribosomal stalk of the 50S ribosomal subunit. The N-terminus interacts with L11 and the large rRNA to form the base of the stalk. The C-terminus forms an elongated spine to which L12 dimers bind in a sequential fashion forming a multimeric L10(L12)X complex.

Forms part of the ribosomal stalk, playing a central role in the interaction of the ribosome with GTP-bound translation factors. This chain is Large ribosomal subunit protein uL10, found in Histophilus somni (strain 129Pt) (Haemophilus somnus).